An 801-amino-acid chain; its full sequence is MDISNEAGVDAFSIIGPTTIIGRTIAVRILFCNSVSIFRHKVFRILKFFLRGGRVLLSPFVSLLHPRNPQGILVMVTTMAFLLNRYTSLKAKAEMAYRRKFWRNMMRAALTYEEWSHAAKMLDKETPKVNETDLFDVELVSNKLDELKHRRHEGSLRDIIFCMRADLVRNLGNMCNPELHKGRLHVPRLIKEYIDEVSTQLRMVCDMDTEELSLEEKLSFMHETRHAYGRTALLLSGGASLGAFHLGVVKTLVEHKLLPRIIAGSSVGSVMCAVVGTRSWPELQSFFEGSWHALQFFDQMGGIFTTVKRVMTQGAVHEIRHLQWKLRNLTNNLTFQEAYDITGRILGITVCSLRKHEPPRCLNYLTSPHVVIWSAVTASCAFPGLFEAQELMAKDRTGEIVPYHPPFNLDPEEGSASVRRWRDGSLEMDLPMIQLKELFNVNHFIVSQANPHIAPFLRMKEFVRACGGRFAAKLAQLAEMEVKHRCNQVLELGLPLREVASLFAQEWEGDVTIVMPATFSQYLKIIQNPSNVEIQKAANQGRRCTWEKLAVIKANFGIELALDECVTVLNHMRRLKRSAERAAAFSAISSSPPSKHLLAGTNRFNASKRIPSWNCIARQNSSGSVDDDVLAEASRLYQHIVVGSGRNSNRTSNLSHTYDAGSECDSPEAEDWTRSGGPLMRTNSAQMFTDYVQNLDAVDPEQIRASENDSIVAASSSSHSITVTEGDYLQTGRTHNGFVLNLVRGENLRMNSEPEDSQNESEIPETPESVQLDSPEKDIIDGESSASEDGDAQANLIHDHE.

N-linked (GlcNAc...) asparagine glycosylation occurs at N130. Helical transmembrane passes span 232–249 (ALLLSGGASLGAFHLGVV) and 261–277 (IIAGSSVGSVMCAVVGT). The 204-residue stretch at 233–436 (LLLSGGASLG…EMDLPMIQLK (204 aa)) folds into the PNPLA domain. A GXSXG motif is present at residues 264–268 (GSSVG). S266 (nucleophile) is an active-site residue. 2 N-linked (GlcNAc...) asparagine glycosylation sites follow: N328 and N332. D423 acts as the Proton acceptor in catalysis. N-linked (GlcNAc...) asparagine glycosylation is found at N605, N620, N649, N653, N708, and N759. The interval 648–675 (SNRTSNLSHTYDAGSECDSPEAEDWTRS) is disordered. Residues 750–801 (MNSEPEDSQNESEIPETPESVQLDSPEKDIIDGESSASEDGDAQANLIHDHE) are disordered. Acidic residues predominate over residues 753–765 (EPEDSQNESEIPE).

Highly expressed in mature pollen.

It localises to the lipid droplet. It is found in the membrane. The catalysed reaction is a triacylglycerol + H2O = a diacylglycerol + a fatty acid + H(+). Its function is as follows. May be involved in the release of fatty acids from the oil body in germinating seedlings. Can hydrolyze triacylglycerols in vitro. This chain is Triacylglycerol lipase SDP1L, found in Arabidopsis thaliana (Mouse-ear cress).